The sequence spans 289 residues: Transcriptional regulator Rob (289 aa).

The region spanning 8–106 (RDLLIWLEGH…SQTPALYRRS (99 aa)) is the HTH araC/xylS-type domain. 2 consecutive DNA-binding regions (H-T-H motif) follow at residues 25-46 (DNVAAKAGYSKWHLQRMFKDVT) and 73-96 (ILDIALQYRFDSQQTFTRAFKKQF).

Its function is as follows. Transcriptional regulator. Represses transcription of genes belonging to the flagellar regulon, including flhD, flhB and fliC; probably thereby leading to repression of motility. Binds to regulatory regions of target genes, including the promoters of the flhDC operon and of P-type ATPase mgtA. Involved in post-transcriptional regulation of expression. Represses expression of the flhDC operon in a post-transcriptional manner. Binds to the right arm of the replication origin oriC of the chromosome. Rob binding may influence the formation of the nucleoprotein structure, required for oriC function in the initiation of replication. The polypeptide is Transcriptional regulator Rob (Salmonella typhimurium (strain LT2 / SGSC1412 / ATCC 700720)).